The primary structure comprises 208 residues: Hypoxanthine-guanine phosphoribosyltransferase (208 aa).

Residues lysine 63, glutamate 122–threonine 130, lysine 154, and aspartate 182 each bind GMP. Aspartate 126 functions as the Proton acceptor in the catalytic mechanism. Aspartate 182 is a binding site for Mg(2+).

The protein belongs to the purine/pyrimidine phosphoribosyltransferase family. Mg(2+) serves as cofactor.

The protein resides in the cytoplasm. The enzyme catalyses IMP + diphosphate = hypoxanthine + 5-phospho-alpha-D-ribose 1-diphosphate. It carries out the reaction GMP + diphosphate = guanine + 5-phospho-alpha-D-ribose 1-diphosphate. It functions in the pathway purine metabolism; IMP biosynthesis via salvage pathway; IMP from hypoxanthine: step 1/1. Converts guanine to guanosine monophosphate, and hypoxanthine to inosine monophosphate. Transfers the 5-phosphoribosyl group from 5-phosphoribosylpyrophosphate onto the purine. Plays a central role in the generation of purine nucleotides through the purine salvage pathway. In Crithidia fasciculata, this protein is Hypoxanthine-guanine phosphoribosyltransferase (HGPRT).